Here is a 258-residue protein sequence, read N- to C-terminus: ADP-ribose glycohydrolase MACROD1 (258 aa).

Lys29, Lys36, and Lys62 each carry N6-succinyllysine. Lys71 is covalently cross-linked (Glycyl lysine isopeptide (Lys-Gly) (interchain with G-Cter in SUMO2)). One can recognise a Macro domain in the interval 74–255; sequence NPKYKKDKQL…IYQERLPHYF (182 aa). Residue 92–94 coordinates substrate; that stretch reads GDI. N6-acetyllysine is present on Lys96. Substrate-binding positions include 105–107, 112–117, 200–206, and Phe239; these read AAN, GGGGVD, and ISTGVFG.

Belongs to the MacroD-type family. MacroD1/2-like subfamily. Interacts with ESR1; Interacts in a manner that is estrogen independent but is enhanced by estrogen. Interacts (via macro domain) with AR.

The protein resides in the nucleus. It catalyses the reaction 3''-O-acetyl-ADP-D-ribose + H2O = ADP-D-ribose + acetate + H(+). It carries out the reaction 2''-O-acetyl-ADP-D-ribose + H2O = ADP-D-ribose + acetate + H(+). The catalysed reaction is 4-O-(ADP-D-ribosyl)-L-aspartyl-[protein] + H2O = L-aspartyl-[protein] + ADP-D-ribose + H(+). The enzyme catalyses 5-O-(ADP-D-ribosyl)-L-glutamyl-[protein] + H2O = L-glutamyl-[protein] + ADP-D-ribose + H(+). It catalyses the reaction alpha-NAD(+) + H2O = ADP-D-ribose + nicotinamide + H(+). Its activity is regulated as follows. Subject to competitive inhibition by the product ADP-ribose. Removes ADP-ribose from aspartate and glutamate residues in proteins bearing a single ADP-ribose moiety. Inactive towards proteins bearing poly-ADP-ribose. Deacetylates O-acetyl-ADP ribose, a signaling molecule generated by the deacetylation of acetylated lysine residues in histones and other proteins. Plays a role in estrogen signaling. Binds to androgen receptor (AR) and amplifies the transactivation function of AR in response to androgen. May play an important role in carcinogenesis and/or progression of hormone-dependent cancers by feed-forward mechanism that activates ESR1 transactivation. Could be an ESR1 coactivator, providing a positive feedback regulatory loop for ESR1 signal transduction. Could be involved in invasive growth by down-regulating CDH1 in endometrial cancer cells. Enhances ESR1-mediated transcription activity. The polypeptide is ADP-ribose glycohydrolase MACROD1 (Macrod1) (Rattus norvegicus (Rat)).